Reading from the N-terminus, the 413-residue chain is Clamp protein VP6 (413 aa).

The protein belongs to the reoviridae clamp protein family. As to quaternary structure, interacts with capsid proteins VP3, VP4 and VP7.

Its subcellular location is the virion. In terms of biological role, located at the interface of the incomplete T=13 outer capsid and the pseudo T=2 inner capsid, 120 VP6 subunits clamp and stabilize the inner capsid shell. The polypeptide is Clamp protein VP6 (S8) (Ctenopharyngodon idella (Grass carp)).